The chain runs to 481 residues: Proline--tRNA ligase (481 aa).

Belongs to the class-II aminoacyl-tRNA synthetase family. ProS type 3 subfamily. As to quaternary structure, homodimer.

It localises to the cytoplasm. The catalysed reaction is tRNA(Pro) + L-proline + ATP = L-prolyl-tRNA(Pro) + AMP + diphosphate. In terms of biological role, catalyzes the attachment of proline to tRNA(Pro) in a two-step reaction: proline is first activated by ATP to form Pro-AMP and then transferred to the acceptor end of tRNA(Pro). In Chlorobium luteolum (strain DSM 273 / BCRC 81028 / 2530) (Pelodictyon luteolum), this protein is Proline--tRNA ligase.